We begin with the raw amino-acid sequence, 322 residues long: N-acetyl-gamma-glutamyl-phosphate reductase (322 aa).

The active site involves cysteine 132.

Belongs to the NAGSA dehydrogenase family. Type 1 subfamily.

It localises to the cytoplasm. The catalysed reaction is N-acetyl-L-glutamate 5-semialdehyde + phosphate + NADP(+) = N-acetyl-L-glutamyl 5-phosphate + NADPH + H(+). The protein operates within amino-acid biosynthesis; L-arginine biosynthesis; N(2)-acetyl-L-ornithine from L-glutamate: step 3/4. Catalyzes the NADPH-dependent reduction of N-acetyl-5-glutamyl phosphate to yield N-acetyl-L-glutamate 5-semialdehyde. The protein is N-acetyl-gamma-glutamyl-phosphate reductase of Bacteroides fragilis (strain ATCC 25285 / DSM 2151 / CCUG 4856 / JCM 11019 / LMG 10263 / NCTC 9343 / Onslow / VPI 2553 / EN-2).